Here is a 76-residue protein sequence, read N- to C-terminus: Esculentin-2-ALa (76 aa).

Positions 1 to 22 (MFTLKKSMLLLFFLGTISLSLC) are cleaved as a signal peptide. Residues 23–39 (EEERNADEDDGEKEVKR) constitute a propeptide that is removed on maturation. The cysteines at positions 70 and 76 are disulfide-linked.

In terms of tissue distribution, expressed by the skin glands.

Its subcellular location is the secreted. Functionally, antimicrobial peptide with activity against Gram-positive and Gram-negative bacteria and against fungi. Has been tested against S.aureus (MIC=2.5 ug/mL), B.pumilus (MIC=2.5 ug/mL), B.cereus (MIC=7.5 ug/mL), E.coli (MIC=12.5 ug/mL), B.dysenteriae (MIC=7.5 ug/mL), A.cacoaceticus (MIC=25.0 ug/mL), P.aeruginosa (MIC=50.0 ug/mL) and C.albicans (MIC=2.5 ug/mL). Also shows a weak hemolytic activity. The polypeptide is Esculentin-2-ALa (Amolops loloensis (Lolokou Sucker Frog)).